A 124-amino-acid chain; its full sequence is Mini zinc finger protein 4 (124 aa).

Residues 35–84 form a ZF-HD dimerization-type; degenerate zinc finger; it reads YGECRRNHAARMGGHAVDGCREFLAEGEEGTGGALRCAACGCHRSFHRRV.

Homo- and heterodimers.

It localises to the cytoplasm. Functionally, inhibits zinc finger homeodomain (ZHD) transcription factors, by interacting with them to prevent both their nuclear localization and their DNA-binding properties. This Oryza sativa subsp. japonica (Rice) protein is Mini zinc finger protein 4 (MIF4).